We begin with the raw amino-acid sequence, 2240 residues long: Death-inducer obliterator 1 (2240 aa).

Met1 is subject to N-acetylmethionine. Basic and acidic residues predominate over residues 1–25; the sequence is MDDKGDPSNEEAPKAIKPTSKEFRK. Positions 1 to 259 are disordered; the sequence is MDDKGDPSNE…EPGDLGRPKP (259 aa). A phosphoserine mark is found at Ser60 and Ser114. The segment covering 111-130 has biased composition (polar residues); that stretch reads SEGSVESASETRSGPQSAST. A compositionally biased stretch (basic and acidic residues) spans 132 to 146; it reads VKERPASSEKVKGGD. Acidic residues predominate over residues 147–156; sequence DHDDTSDSDS. Thr151 is modified (phosphothreonine). 2 positions are modified to phosphoserine: Ser152 and Ser154. Short sequence motifs (nuclear localization signal) lie at residues 165-173 and 185-193; these read QNRLRRKRE and QSRLRKKRR. Residues 172–181 are compositionally biased toward basic and acidic residues; that stretch reads REQEPTERPL. A compositionally biased stretch (basic and acidic residues) spans 230-246; the sequence is GKDDRESKLEGKAAQDI. Lys247 participates in a covalent cross-link: Glycyl lysine isopeptide (Lys-Gly) (interchain with G-Cter in SUMO2). Residues 268–322 form a PHD-type zinc finger; sequence ALYCICRQPHNNRFMICCDRCEEWFHGDCVGISEARGRLLERNGEDYICPNCTIL. Disordered regions lie at residues 431-456, 501-567, 584-618, 773-826, 860-947, 1013-1045, 1206-1427, 1453-1472, and 1517-2240; these read SGKEQKPKPKEKMKMKPEKPSLPKCG, STPS…RNLV, KKPPSGFKGTIPKRPWLSATPSSGASAARQAGPAP, RPAR…EKST, VPSA…EDLS, LAKPSSSPDPRYLSVPPSPNISTSESRSPPEGD, GELD…VAYD, RRNSVERPAEPVAGAATPSL, and SDAL…ASQA. Residues 433–451 are compositionally biased toward basic and acidic residues; that stretch reads KEQKPKPKEKMKMKPEKPS. The span at 501-510 shows a compositional bias: polar residues; it reads STPSWASDHN. Ser523 carries the phosphoserine modification. The span at 530–541 shows a compositional bias: basic and acidic residues; sequence STKEDRRSEEKA. Low complexity-rich tracts occupy residues 542 to 551 and 604 to 618; these read AAMAASKKTA and PSSGASAARQAGPAP. One can recognise a TFIIS central domain in the interval 670–790; sequence IRQNIRRSLK…SRTKLHNESK (121 aa). Residues 773-791 show a composition bias toward basic and acidic residues; it reads RPARSVMESRTKLHNESKK. Over residues 800-815 the composition is skewed to acidic residues; it reads PDLEDSPPVSDSEEQQ. 2 positions are modified to phosphoserine: Ser805 and Ser809. The span at 878–890 shows a compositional bias: basic and acidic residues; sequence VKKEDLKSKHDSS. A Glycyl lysine isopeptide (Lys-Gly) (interchain with G-Cter in SUMO2) cross-link involves residue Lys879. 2 positions are modified to phosphoserine: Ser889 and Ser898. Residues 930-941 are compositionally biased toward pro residues; the sequence is PGPPGDGHPEPS. Residues Ser1019, Ser1030, and Ser1040 each carry the phosphoserine modification. Over residues 1207–1220 the composition is skewed to basic and acidic residues; that stretch reads ELDKMDEKRTRLQP. Phosphotyrosine is present on Tyr1244. At Thr1256 the chain carries Phosphothreonine. Residues 1258-1271 show a composition bias toward pro residues; it reads PGSPPPPPPLPEPP. A phosphoserine mark is found at Ser1260 and Ser1312. A compositionally biased stretch (low complexity) spans 1276–1313; it reads LSSLKPAAPSPATAATTAAAASTAASSTASSASKTASP. Residues 1376 to 1392 are compositionally biased toward acidic residues; it reads LEEEEDDRPYDPEEEYD. A compositionally biased stretch (basic and acidic residues) spans 1393–1424; that stretch reads PERAFDTQLVERGRRHEVERAPEAAAAEREEV. The residue at position 1456 (Ser1456) is a Phosphoserine. Thr1469 carries the phosphothreonine modification. Phosphoserine is present on residues Ser1522 and Ser1714. A compositionally biased stretch (pro residues) spans 1771 to 1782; the sequence is FPGPRGPAPPFP. Omega-N-methylarginine is present on Arg1835. The segment covering 1842 to 1856 has biased composition (basic and acidic residues); the sequence is FEERKDPHGEKREFQ. Residues Arg1893, Arg1894, Arg1977, Arg1982, Arg1993, Arg2008, and Arg2024 each carry the asymmetric dimethylarginine modification. Residues 2044 to 2059 show a composition bias toward low complexity; it reads AGPPSALSSSAPGQGP. Basic and acidic residues-rich tracts occupy residues 2069–2101 and 2109–2230; these read DFREGKGHEYRNQTFEGRQRERFDVGPKEKPLE and ASED…EASR.

In terms of assembly, interacts specifically (via PHD-type zinc finger) with histone H3 that is trimethylated at 'Lys-4' (H3K4me3), histone phosphorylation at 'Thr-3' or 'Thr-6' disrupts this binding and promotes translocation of DIDO1 from chromatin to the mitotic spindle during mitosis. In terms of tissue distribution, ubiquitous.

It is found in the cytoplasm. The protein localises to the nucleus. Its subcellular location is the cytoskeleton. The protein resides in the spindle. Functionally, putative transcription factor, weakly pro-apoptotic when overexpressed. Tumor suppressor. Required for early embryonic stem cell development. Its function is as follows. Displaces isoform 4 at the onset of differentiation, required for repression of stemness genes. This Homo sapiens (Human) protein is Death-inducer obliterator 1 (DIDO1).